Here is a 143-residue protein sequence, read N- to C-terminus: Small ribosomal subunit protein uS9 (143 aa).

The disordered stretch occupies residues aspartate 118–arginine 143. Residues proline 127–arginine 143 are compositionally biased toward basic residues.

The protein belongs to the universal ribosomal protein uS9 family.

The chain is Small ribosomal subunit protein uS9 from Thermococcus sibiricus (strain DSM 12597 / MM 739).